A 290-amino-acid chain; its full sequence is UBX domain-containing protein 1-B (290 aa).

The 42-residue stretch at 1 to 42 (MADCSALESLIEMGFSPSRAEKALSATGNQGIEPAMDWLVEH) folds into the UBA domain. The interval 49–210 (KEPSVVIPED…VQEPPTKKEY (162 aa)) is disordered. Composition is skewed to basic and acidic residues over residues 80-117 (PLTE…EQEK) and 132-172 (RMQE…DRAR). Positions 81-171 (LTEEEKEKQT…KIARDKADRA (91 aa)) form a coiled coil. Residues 185-201 (PAETSVPATAPSPSSPV) show a composition bias toward low complexity. The UBX domain occupies 208 to 287 (KEYDQCRIQV…GLVPTAVLIV (80 aa)).

It is found in the cytoplasm. In terms of biological role, component of a complex required to couple deglycosylation and proteasome-mediated degradation of misfolded proteins in the endoplasmic reticulum that are retrotranslocated in the cytosol. Involved in ubiquitin-proteasome systems. This chain is UBX domain-containing protein 1-B (ubxn1-b), found in Xenopus laevis (African clawed frog).